The chain runs to 473 residues: NAD-dependent protein deacetylase SRT1 (473 aa).

Residues 27–267 (SHLLQCKIEE…AGVMESLNMK (241 aa)) form the Deacetylase sirtuin-type domain. NAD(+) contacts are provided by residues 52–71 (GAGI…KGIW) and 114–117 (QNVD). His-134 acts as the Proton acceptor in catalysis. The Zn(2+) site is built by Cys-142, Cys-145, Cys-167, and Cys-172. Residues 209-211 (GTS), 235-237 (NLQ), and Val-253 each bind NAD(+). The disordered stretch occupies residues 447-473 (LEGSGTSRKRSRTGKRKSKALAEETKA). Residues 453–465 (SRKRSRTGKRKSK) are compositionally biased toward basic residues.

Belongs to the sirtuin family. Class IV subfamily. Binds to the promoter region of genes influenced by ethylene. Interacts with ENAP1; this interaction is enhanced in the presence of ethylene. Requires Zn(2+) as cofactor.

It localises to the nucleus. It carries out the reaction N(6)-acetyl-L-lysyl-[protein] + NAD(+) + H2O = 2''-O-acetyl-ADP-D-ribose + nicotinamide + L-lysyl-[protein]. In terms of biological role, NAD-dependent protein deacetylase. Has deacetylase activity towards H3K9Ac. May have a function in the safeguard against genome instability and DNA damage to ensure plant cell growth. Involved in responses to ethylene leading to the transcriptional repression of some ethylene-responsive genes via the regulation of histone acetylation H3K9Ac. The chain is NAD-dependent protein deacetylase SRT1 from Arabidopsis thaliana (Mouse-ear cress).